Consider the following 198-residue polypeptide: Small ribosomal subunit protein uS4 (198 aa).

The region spanning 91–154 (SRLDNVVYRL…KNLNIVQEAL (64 aa)) is the S4 RNA-binding domain.

The protein belongs to the universal ribosomal protein uS4 family. Part of the 30S ribosomal subunit. Contacts protein S5. The interaction surface between S4 and S5 is involved in control of translational fidelity.

Functionally, one of the primary rRNA binding proteins, it binds directly to 16S rRNA where it nucleates assembly of the body of the 30S subunit. In terms of biological role, with S5 and S12 plays an important role in translational accuracy. In Aster yellows witches'-broom phytoplasma (strain AYWB), this protein is Small ribosomal subunit protein uS4.